Reading from the N-terminus, the 332-residue chain is Phenylalanine--tRNA ligase alpha subunit (332 aa).

Residue Glu254 coordinates Mg(2+).

The protein belongs to the class-II aminoacyl-tRNA synthetase family. Phe-tRNA synthetase alpha subunit type 1 subfamily. Tetramer of two alpha and two beta subunits. Mg(2+) serves as cofactor.

The protein localises to the cytoplasm. It carries out the reaction tRNA(Phe) + L-phenylalanine + ATP = L-phenylalanyl-tRNA(Phe) + AMP + diphosphate + H(+). The protein is Phenylalanine--tRNA ligase alpha subunit of Hydrogenovibrio crunogenus (strain DSM 25203 / XCL-2) (Thiomicrospira crunogena).